The chain runs to 246 residues: E3 ubiquitin-protein ligase MARCHF2 (246 aa).

The RING-CH-type zinc finger occupies G56 to E116. Zn(2+)-binding residues include C64, C67, C80, C82, H90, C93, C106, and C109. 2 helical membrane passes run L138–L158 and A175–V195.

It localises to the endoplasmic reticulum membrane. The protein resides in the lysosome membrane. Its subcellular location is the endosome membrane. The enzyme catalyses S-ubiquitinyl-[E2 ubiquitin-conjugating enzyme]-L-cysteine + [acceptor protein]-L-lysine = [E2 ubiquitin-conjugating enzyme]-L-cysteine + N(6)-ubiquitinyl-[acceptor protein]-L-lysine.. Its pathway is protein modification; protein ubiquitination. Its function is as follows. E3 ubiquitin-protein ligase which may be involved in endosomal trafficking. E3 ubiquitin ligases accept ubiquitin from an E2 ubiquitin-conjugating enzyme in the form of a thioester and then directly transfer the ubiquitin to targeted substrates. This is E3 ubiquitin-protein ligase MARCHF2 (marchf2) from Xenopus tropicalis (Western clawed frog).